A 337-amino-acid chain; its full sequence is Probable tyrosine--tRNA ligase, cytoplasmic (337 aa).

Tyr-35 contributes to the L-tyrosine binding site. A 'HIGH' region motif is present at residues 40–48 (ITGKPHIAY). The L-tyrosine site is built by Tyr-162, Gln-166, Asp-169, and Gln-184. The short motif at 218–222 (KMSSS) is the 'KMSKS' region element.

This sequence belongs to the class-I aminoacyl-tRNA synthetase family. As to quaternary structure, homodimer.

It localises to the cytoplasm. The enzyme catalyses tRNA(Tyr) + L-tyrosine + ATP = L-tyrosyl-tRNA(Tyr) + AMP + diphosphate + H(+). This Encephalitozoon cuniculi (strain GB-M1) (Microsporidian parasite) protein is Probable tyrosine--tRNA ligase, cytoplasmic.